Consider the following 356-residue polypeptide: HTH-type transcriptional regulator AglR (356 aa).

One can recognise an HTH lacI-type domain in the interval 1–57 (MPVNLKQLAELLGLSQTTVSRALNGYPEVNAETRARVLEAVRETGYRPNRAAQRLAT). The H-T-H motif DNA-binding region spans 5–24 (LKQLAELLGLSQTTVSRALN). The segment at 337-356 (TGPAPDRSPLPNPSPQVGGA) is disordered.

Probable regulatory protein for the binding-protein-dependent transport system for alpha-glucosides such as sucrose, maltose and trehalose. The polypeptide is HTH-type transcriptional regulator AglR (aglR) (Rhizobium meliloti (strain 1021) (Ensifer meliloti)).